The following is a 1067-amino-acid chain: Mediator of RNA polymerase II transcription subunit 5 (1067 aa).

This sequence belongs to the Mediator complex subunit 5 family. As to quaternary structure, component of the Mediator complex.

It localises to the nucleus. Its function is as follows. Component of the Mediator complex, a coactivator involved in the regulated transcription of nearly all RNA polymerase II-dependent genes. Mediator functions as a bridge to convey information from gene-specific regulatory proteins to the basal RNA polymerase II transcription machinery. Mediator is recruited to promoters by direct interactions with regulatory proteins and serves as a scaffold for the assembly of a functional preinitiation complex with RNA polymerase II and the general transcription factors. This Kluyveromyces lactis (strain ATCC 8585 / CBS 2359 / DSM 70799 / NBRC 1267 / NRRL Y-1140 / WM37) (Yeast) protein is Mediator of RNA polymerase II transcription subunit 5 (NUT1).